Consider the following 154-residue polypeptide: Superoxide dismutase [Cu-Zn] 1 (154 aa).

Positions 47, 49, and 64 each coordinate Cu cation. Residues Cys58 and Cys147 are joined by a disulfide bond. Zn(2+) contacts are provided by His64, His72, His81, and Asp84. Position 121 (His121) interacts with Cu cation. Residue Arg144 participates in substrate binding.

This sequence belongs to the Cu-Zn superoxide dismutase family. As to quaternary structure, homodimer. It depends on Cu cation as a cofactor. Zn(2+) is required as a cofactor.

The protein resides in the cytoplasm. The catalysed reaction is 2 superoxide + 2 H(+) = H2O2 + O2. In terms of biological role, destroys radicals which are normally produced within the cells and which are toxic to biological systems. The sequence is that of Superoxide dismutase [Cu-Zn] 1 (SOD1) from Debaryomyces hansenii (strain ATCC 36239 / CBS 767 / BCRC 21394 / JCM 1990 / NBRC 0083 / IGC 2968) (Yeast).